Reading from the N-terminus, the 387-residue chain is ATP phosphoribosyltransferase regulatory subunit (387 aa).

Belongs to the class-II aminoacyl-tRNA synthetase family. HisZ subfamily. As to quaternary structure, heteromultimer composed of HisG and HisZ subunits.

The protein resides in the cytoplasm. Its pathway is amino-acid biosynthesis; L-histidine biosynthesis; L-histidine from 5-phospho-alpha-D-ribose 1-diphosphate: step 1/9. In terms of biological role, required for the first step of histidine biosynthesis. May allow the feedback regulation of ATP phosphoribosyltransferase activity by histidine. The chain is ATP phosphoribosyltransferase regulatory subunit from Methylobacillus flagellatus (strain ATCC 51484 / DSM 6875 / VKM B-1610 / KT).